The sequence spans 339 residues: Holliday junction branch migration complex subunit RuvB (339 aa).

Positions 1–180 (MTRTITPDMT…FGVISRLEFY (180 aa)) are large ATPase domain (RuvB-L). ATP is bound by residues L19, R20, G61, K64, T65, T66, 127–129 (EDF), R170, Y180, and R217. Mg(2+) is bound at residue T65. The tract at residues 181 to 251 (TIEELAFIIT…VVQDALALLE (71 aa)) is small ATPAse domain (RuvB-S). The interval 254–339 (HMGFDYMDRM…EPPQGKLFQD (86 aa)) is head domain (RuvB-H). Residues R309 and R314 each coordinate DNA.

The protein belongs to the RuvB family. As to quaternary structure, homohexamer. Forms an RuvA(8)-RuvB(12)-Holliday junction (HJ) complex. HJ DNA is sandwiched between 2 RuvA tetramers; dsDNA enters through RuvA and exits via RuvB. An RuvB hexamer assembles on each DNA strand where it exits the tetramer. Each RuvB hexamer is contacted by two RuvA subunits (via domain III) on 2 adjacent RuvB subunits; this complex drives branch migration. In the full resolvosome a probable DNA-RuvA(4)-RuvB(12)-RuvC(2) complex forms which resolves the HJ.

The protein localises to the cytoplasm. The catalysed reaction is ATP + H2O = ADP + phosphate + H(+). The RuvA-RuvB-RuvC complex processes Holliday junction (HJ) DNA during genetic recombination and DNA repair, while the RuvA-RuvB complex plays an important role in the rescue of blocked DNA replication forks via replication fork reversal (RFR). RuvA specifically binds to HJ cruciform DNA, conferring on it an open structure. The RuvB hexamer acts as an ATP-dependent pump, pulling dsDNA into and through the RuvAB complex. RuvB forms 2 homohexamers on either side of HJ DNA bound by 1 or 2 RuvA tetramers; 4 subunits per hexamer contact DNA at a time. Coordinated motions by a converter formed by DNA-disengaged RuvB subunits stimulates ATP hydrolysis and nucleotide exchange. Immobilization of the converter enables RuvB to convert the ATP-contained energy into a lever motion, pulling 2 nucleotides of DNA out of the RuvA tetramer per ATP hydrolyzed, thus driving DNA branch migration. The RuvB motors rotate together with the DNA substrate, which together with the progressing nucleotide cycle form the mechanistic basis for DNA recombination by continuous HJ branch migration. Branch migration allows RuvC to scan DNA until it finds its consensus sequence, where it cleaves and resolves cruciform DNA. The chain is Holliday junction branch migration complex subunit RuvB from Geotalea daltonii (strain DSM 22248 / JCM 15807 / FRC-32) (Geobacter daltonii).